Here is a 602-residue protein sequence, read N- to C-terminus: GTP-binding protein 2 (602 aa).

The tract at residues glycine 18–glutamate 64 is disordered. The segment covering glycine 29 to proline 39 has biased composition (gly residues). Positions lysine 40–glycine 50 are enriched in basic residues. Residues phenylalanine 170–serine 398 enclose the tr-type G domain. Residues glycine 179–serine 186, aspartate 260–histidine 264, and serine 316–aspartate 319 contribute to the GTP site.

It belongs to the TRAFAC class translation factor GTPase superfamily. Classic translation factor GTPase family. GTPBP1 subfamily. Predominantly expressed in thymus, spleen, and testis. Expressed at lower levels in brain, heart, lung, kidney, and skeletal muscle. In testis, specifically expressed in spermatocytes and round spermatids.

This chain is GTP-binding protein 2, found in Mus musculus (Mouse).